The sequence spans 114 residues: Probable non-functional T cell receptor beta variable 5-7 (114 aa).

Positions Met1–Ala21 are cleaved as a signal peptide. Residues Gly22 to Leu114 form the Ig-like domain. A disulfide bond links Cys42 and Cys110. Asn90 carries an N-linked (GlcNAc...) asparagine glycan.

Alpha-beta TR is a heterodimer composed of an alpha and beta chain; disulfide-linked. The alpha-beta TR is associated with the transmembrane signaling CD3 coreceptor proteins to form the TR-CD3 (TcR or TCR). The assembly of alpha-beta TR heterodimers with CD3 occurs in the endoplasmic reticulum where a single alpha-beta TR heterodimer associates with one CD3D-CD3E heterodimer, one CD3G-CD3E heterodimer and one CD247 homodimer forming a stable octameric structure. CD3D-CD3E and CD3G-CD3E heterodimers preferentially associate with TR alpha and TR beta chains, respectively. The association of the CD247 homodimer is the last step of TcR assembly in the endoplasmic reticulum and is required for transport to the cell surface.

It is found in the cell membrane. Probable non-functional open reading frame (ORF) of V region of the variable domain of T cell receptor (TR) beta chain. Non-functional ORF generally cannot participate in the synthesis of a productive T cell receptor (TR) chain due to altered V-(D)-J or switch recombination and/or splicing site (at mRNA level) and/or conserved amino acid change (protein level). Alpha-beta T cell receptors are antigen specific receptors which are essential to the immune response and are present on the cell surface of T lymphocytes. Recognize peptide-major histocompatibility (MH) (pMH) complexes that are displayed by antigen presenting cells (APC), a prerequisite for efficient T cell adaptive immunity against pathogens. Binding of alpha-beta TR to pMH complex initiates TR-CD3 clustering on the cell surface and intracellular activation of LCK that phosphorylates the ITAM motifs of CD3G, CD3D, CD3E and CD247 enabling the recruitment of ZAP70. In turn ZAP70 phosphorylates LAT, which recruits numerous signaling molecules to form the LAT signalosome. The LAT signalosome propagates signal branching to three major signaling pathways, the calcium, the mitogen-activated protein kinase (MAPK) kinase and the nuclear factor NF-kappa-B (NF-kB) pathways, leading to the mobilization of transcription factors that are critical for gene expression and essential for T cell growth and differentiation. The T cell repertoire is generated in the thymus, by V-(D)-J rearrangement. This repertoire is then shaped by intrathymic selection events to generate a peripheral T cell pool of self-MH restricted, non-autoaggressive T cells. Post-thymic interaction of alpha-beta TR with the pMH complexes shapes TR structural and functional avidity. This chain is Probable non-functional T cell receptor beta variable 5-7, found in Homo sapiens (Human).